The primary structure comprises 453 residues: Kynureninase (453 aa).

Pyridoxal 5'-phosphate is bound by residues L114, T115, 142 to 145 (FPSD), D232, H235, and Y257. An N6-(pyridoxal phosphate)lysine modification is found at K258. W286 is a binding site for pyridoxal 5'-phosphate.

Belongs to the kynureninase family. Homodimer. Pyridoxal 5'-phosphate is required as a cofactor.

The protein resides in the cytoplasm. It carries out the reaction L-kynurenine + H2O = anthranilate + L-alanine + H(+). The catalysed reaction is 3-hydroxy-L-kynurenine + H2O = 3-hydroxyanthranilate + L-alanine + H(+). It participates in amino-acid degradation; L-kynurenine degradation; L-alanine and anthranilate from L-kynurenine: step 1/1. Its pathway is cofactor biosynthesis; NAD(+) biosynthesis; quinolinate from L-kynurenine: step 2/3. In terms of biological role, catalyzes the cleavage of L-kynurenine (L-Kyn) and L-3-hydroxykynurenine (L-3OHKyn) into anthranilic acid (AA) and 3-hydroxyanthranilic acid (3-OHAA), respectively. In Cryptococcus neoformans var. neoformans serotype D (strain JEC21 / ATCC MYA-565) (Filobasidiella neoformans), this protein is Kynureninase.